The following is a 103-amino-acid chain: Large ribosomal subunit protein uL24 (103 aa).

This sequence belongs to the universal ribosomal protein uL24 family. In terms of assembly, part of the 50S ribosomal subunit.

In terms of biological role, one of two assembly initiator proteins, it binds directly to the 5'-end of the 23S rRNA, where it nucleates assembly of the 50S subunit. One of the proteins that surrounds the polypeptide exit tunnel on the outside of the subunit. This is Large ribosomal subunit protein uL24 from Brucella abortus (strain S19).